The chain runs to 245 residues: 5-oxoprolinase subunit A (245 aa).

Belongs to the LamB/PxpA family. In terms of assembly, forms a complex composed of PxpA, PxpB and PxpC.

The catalysed reaction is 5-oxo-L-proline + ATP + 2 H2O = L-glutamate + ADP + phosphate + H(+). Catalyzes the cleavage of 5-oxoproline to form L-glutamate coupled to the hydrolysis of ATP to ADP and inorganic phosphate. The sequence is that of 5-oxoprolinase subunit A from Neisseria meningitidis serogroup A / serotype 4A (strain DSM 15465 / Z2491).